A 305-amino-acid polypeptide reads, in one-letter code: tRNA uridine(34) hydroxylase (305 aa).

Residues 130–228 enclose the Rhodanese domain; it reads DDPDTLVIDT…YLGEIPEQES (99 aa). C188 functions as the Cysteine persulfide intermediate in the catalytic mechanism.

This sequence belongs to the TrhO family.

It catalyses the reaction uridine(34) in tRNA + AH2 + O2 = 5-hydroxyuridine(34) in tRNA + A + H2O. Functionally, catalyzes oxygen-dependent 5-hydroxyuridine (ho5U) modification at position 34 in tRNAs. The chain is tRNA uridine(34) hydroxylase from Synechococcus sp. (strain CC9902).